The primary structure comprises 485 residues: E3 ubiquitin-protein ligase RNF14 (485 aa).

One can recognise an RWD domain in the interval 11 to 137 (DELLALASIY…QFLKEETLTY (127 aa)). Positions 37–45 (RIYLDLPQN) match the D-box motif. The tract at residues 217–458 (KLFLCSICFC…DSESPCFNRL (242 aa)) is TRIAD supradomain. Positions 221, 224, 239, 241, 244, 247, 266, 271, 310, 315, 330, 333, 338, 341, and 346 each coordinate Zn(2+). The RING-type 1 zinc-finger motif lies at 221-271 (CSICFCEKLGSDCMYFLECKHVYCKACLKDYFEIQIKDGQVKCLNCPEPQC). The IBR-type zinc-finger motif lies at 290–351 (ARYDRLLLQS…RLTYHGLSPC (62 aa)). S349 carries the phosphoserine modification. The Zn(2+) site is built by C351, C405, and C408. The RING-type 2; atypical zinc finger occupies 405–434 (CPCCGTPIQKLDGCNKMTCTGCMQYFCWIC). C418 is an active-site residue. Positions 423, 426, 431, 434, 446, and 454 each coordinate Zn(2+).

The protein belongs to the RBR family. RNF14 subfamily. Interacts with GCN1; interaction takes place in response to ribosome collisions and is required for ubiquitination of EEF1A1/eEF1A. Interacts with the ubiquitin-conjugating enzymes UBE2E1 and UBE2E2. Interacts with AR/androgen receptor. Interacts with TCF7/TCF1, TCF7L1/TCF3 and TCF7L2/TCF4; promoting Wnt signaling. Post-translationally, RING-type zinc finger-dependent and UBE2E2-dependent autoubiquitination.

Its subcellular location is the cytoplasm. It localises to the nucleus. It catalyses the reaction [E2 ubiquitin-conjugating enzyme]-S-ubiquitinyl-L-cysteine + [acceptor protein]-L-lysine = [E2 ubiquitin-conjugating enzyme]-L-cysteine + [acceptor protein]-N(6)-ubiquitinyl-L-lysine.. Its pathway is protein modification; protein ubiquitination. E3 ubiquitin-protein ligase that plays a key role in the RNF14-RNF25 translation quality control pathway, a pathway that takes place when a ribosome has stalled during translation, and which promotes ubiquitination and degradation of translation factors on stalled ribosomes. Recruited to stalled ribosomes by the ribosome collision sensor GCN1 and mediates 'Lys-6'-linked ubiquitination of target proteins, leading to their degradation. Mediates ubiquitination of EEF1A1/eEF1A and ETF1/eRF1 translation factors on stalled ribosomes, leading to their degradation. Also catalyzes ubiquitination of ribosomal proteins RPL0, RPL1, RPL12, RPS13 and RPS17. Specifically required to resolve RNA-protein cross-links caused by reactive aldehydes, which trigger translation stress by stalling ribosomes: acts by catalying 'Lys-6'-linked ubiquitination of RNA-protein cross-links, leading to their removal by the ATP-dependent unfoldase VCP and subsequent degradation by the proteasome. Independently of its function in the response to stalled ribosomes, acts as a regulator of transcription in Wnt signaling via its interaction with TCF transcription factors (TCF7/TCF1, TCF7L1/TCF3 and TCF7L2/TCF4). May also play a role as a coactivator for androgen- and, to a lesser extent, progesterone-dependent transcription. This Mus musculus (Mouse) protein is E3 ubiquitin-protein ligase RNF14.